The following is a 238-amino-acid chain: ATP synthase subunit a (238 aa).

7 helical membrane-spanning segments follow: residues 35-55 (SNVIYAWFAMVLLIILGTLAT), 61-81 (VPSGLQNFFEVVVGGLESFVV), 94-114 (FLCALFLFIITGNLIGLVPGL), 128-148 (ALTVFAYYNFWGIRMWGAGYI), 151-171 (FMGPFWWLVPLMLPIEIISHL), 190-210 (IVLVLLFALAPVVGTFPMYFL), and 211-231 (FSLADCIQAFVFFMLAMIYLK).

This sequence belongs to the ATPase A chain family. In terms of assembly, F-type ATPases have 2 components, CF(1) - the catalytic core - and CF(0) - the membrane proton channel. CF(1) has five subunits: alpha(3), beta(3), gamma(1), delta(1), epsilon(1). CF(0) has three main subunits: a(1), b(2) and c(9-12). The alpha and beta chains form an alternating ring which encloses part of the gamma chain. CF(1) is attached to CF(0) by a central stalk formed by the gamma and epsilon chains, while a peripheral stalk is formed by the delta and b chains.

The protein resides in the cell inner membrane. Key component of the proton channel; it plays a direct role in the translocation of protons across the membrane. This is ATP synthase subunit a from Solidesulfovibrio magneticus (strain ATCC 700980 / DSM 13731 / RS-1) (Desulfovibrio magneticus).